The chain runs to 388 residues: Chorismate synthase (388 aa).

2 residues coordinate NADP(+): Arg-39 and Arg-45. The disordered stretch occupies residues 95–118 (EKNEKSRRVSRPRPGHADLVGGMK). Residues 130 to 132 (RSS), 251 to 252 (NA), Gly-296, 311 to 315 (KPIPT), and Arg-337 each bind FMN.

Belongs to the chorismate synthase family. In terms of assembly, homotetramer. It depends on FMNH2 as a cofactor.

The enzyme catalyses 5-O-(1-carboxyvinyl)-3-phosphoshikimate = chorismate + phosphate. The protein operates within metabolic intermediate biosynthesis; chorismate biosynthesis; chorismate from D-erythrose 4-phosphate and phosphoenolpyruvate: step 7/7. Catalyzes the anti-1,4-elimination of the C-3 phosphate and the C-6 proR hydrogen from 5-enolpyruvylshikimate-3-phosphate (EPSP) to yield chorismate, which is the branch point compound that serves as the starting substrate for the three terminal pathways of aromatic amino acid biosynthesis. This reaction introduces a second double bond into the aromatic ring system. This is Chorismate synthase from Listeria innocua serovar 6a (strain ATCC BAA-680 / CLIP 11262).